Here is a 278-residue protein sequence, read N- to C-terminus: Non-heme chloroperoxidase (278 aa).

In terms of domain architecture, AB hydrolase-1 spans 26-264 (PVVLIHGFPL…GAPHGLLWTH (239 aa)). Active-site residues include S99, D229, and H258.

The protein belongs to the AB hydrolase superfamily. Bacterial non-heme haloperoxidase / perhydrolase family. Homodimer.

The sequence is that of Non-heme chloroperoxidase (cpo) from Kitasatospora aureofaciens (Streptomyces aureofaciens).